The primary structure comprises 282 residues: 4-hydroxy-3-methylbut-2-enyl diphosphate reductase (282 aa).

Position 14 (Cys-14) interacts with [4Fe-4S] cluster. (2E)-4-hydroxy-3-methylbut-2-enyl diphosphate-binding residues include His-43 and His-78. Dimethylallyl diphosphate is bound by residues His-43 and His-78. His-43 and His-78 together coordinate isopentenyl diphosphate. Cys-100 is a [4Fe-4S] cluster binding site. Residue His-128 coordinates (2E)-4-hydroxy-3-methylbut-2-enyl diphosphate. His-128 serves as a coordination point for dimethylallyl diphosphate. Isopentenyl diphosphate is bound at residue His-128. Glu-130 acts as the Proton donor in catalysis. Thr-164 contacts (2E)-4-hydroxy-3-methylbut-2-enyl diphosphate. Cys-192 contacts [4Fe-4S] cluster. (2E)-4-hydroxy-3-methylbut-2-enyl diphosphate-binding residues include Ser-220, Ser-221, Asn-222, and Ser-266. Dimethylallyl diphosphate contacts are provided by Ser-220, Ser-221, Asn-222, and Ser-266. Isopentenyl diphosphate is bound by residues Ser-220, Ser-221, Asn-222, and Ser-266.

Belongs to the IspH family. Requires [4Fe-4S] cluster as cofactor.

It carries out the reaction isopentenyl diphosphate + 2 oxidized [2Fe-2S]-[ferredoxin] + H2O = (2E)-4-hydroxy-3-methylbut-2-enyl diphosphate + 2 reduced [2Fe-2S]-[ferredoxin] + 2 H(+). The enzyme catalyses dimethylallyl diphosphate + 2 oxidized [2Fe-2S]-[ferredoxin] + H2O = (2E)-4-hydroxy-3-methylbut-2-enyl diphosphate + 2 reduced [2Fe-2S]-[ferredoxin] + 2 H(+). It functions in the pathway isoprenoid biosynthesis; dimethylallyl diphosphate biosynthesis; dimethylallyl diphosphate from (2E)-4-hydroxy-3-methylbutenyl diphosphate: step 1/1. It participates in isoprenoid biosynthesis; isopentenyl diphosphate biosynthesis via DXP pathway; isopentenyl diphosphate from 1-deoxy-D-xylulose 5-phosphate: step 6/6. Catalyzes the conversion of 1-hydroxy-2-methyl-2-(E)-butenyl 4-diphosphate (HMBPP) into a mixture of isopentenyl diphosphate (IPP) and dimethylallyl diphosphate (DMAPP). Acts in the terminal step of the DOXP/MEP pathway for isoprenoid precursor biosynthesis. The protein is 4-hydroxy-3-methylbut-2-enyl diphosphate reductase of Clostridium perfringens (strain SM101 / Type A).